Reading from the N-terminus, the 1781-residue chain is BCL-6 corepressor-like protein 1 (1781 aa).

Disordered regions lie at residues 64–136 and 337–362; these read AVGS…SHSR and ASTPPAAPAPPSVPMPTPTPSSGPPS. Composition is skewed to polar residues over residues 66–82 and 127–136; these read GSGSNARGTNPDGNTTE and PDSTEASHSR. Ser490 carries the post-translational modification Phosphoserine. Positions 521–531 are enriched in low complexity; sequence SCTSPSSSTNS. 5 disordered regions span residues 521-545, 561-616, 733-777, 869-895, and 933-960; these read SCTSPSSSTNSQPAPDGVPGPLADT, LLPA…EMPL, NRDP…STVK, PLGSSETVHGLPEGQPRPGGPFAPEQD, and QPSSGDMGVNQGSEESESHLCSDSTPKM. Residues 581 to 594 are compositionally biased toward polar residues; that stretch reads TDQQTEGTSVTFSP. Phosphoserine occurs at positions 593 and 607. Residue Lys741 forms a Glycyl lysine isopeptide (Lys-Gly) (interchain with G-Cter in SUMO2) linkage. Residue Ser1024 is modified to Phosphoserine. Residue Lys1087 forms a Glycyl lysine isopeptide (Lys-Gly) (interchain with G-Cter in SUMO2) linkage. The interval 1100–1484 is disordered; sequence WQPDEETESL…PTARQIPPEA (385 aa). Residues 1116–1127 are compositionally biased toward basic and acidic residues; it reads CNKEKEIEEEPR. The residue at position 1162 (Ser1162) is a Phosphoserine. The span at 1176-1185 shows a compositional bias: basic residues; it reads VRGKHKHRKP. The span at 1195 to 1213 shows a compositional bias: basic and acidic residues; the sequence is KRTDGHEEGSLEKKAKNSF. Residues 1222-1234 show a composition bias toward polar residues; sequence STRTRSQSGSICS. Composition is skewed to basic and acidic residues over residues 1271-1284 and 1297-1307; these read TQRDTQYRSHHAQD and RAREMPWRTEA. The span at 1314 to 1324 shows a compositional bias: acidic residues; the sequence is TNEEEEDDEEE. Residues 1328–1339 are compositionally biased toward basic residues; that stretch reads KRKKRRRQKSRK. The segment covering 1350 to 1362 has biased composition (basic and acidic residues); sequence EEQRRKGRADSKA. 2 stretches are compositionally biased toward polar residues: residues 1381 to 1394 and 1437 to 1449; these read LLLSSKAQGISDSP and RWSQQKTRSSKSP. ANK repeat units lie at residues 1493-1523, 1527-1556, and 1560-1589; these read AGETLLQRAARLGYKDVVLYCLQKHSEDVNH, AGYTALHEACSRGWTDILNILLQHGANVNC, and DGTRPVHDAVVNDNLETIWLLLSYGADPTL. A PCGF Ub-like fold domain (PUFD); required for the interaction with the KDM2B-SKP1 heterodimeric complex region spans residues 1664 to 1781; sequence DDFMFELSDK…SEVEYQSWSS (118 aa).

This sequence belongs to the BCOR family. Interacts with PCGF1, forming heterodimers. The PCGF1-BCORL1 heterodimeric complex interacts with the KDM2B-SKP1 heterodimeric complex to form a homotetrameric polycomb repression complex 1 (PRC1.1). Interacts with SKP1. Interacts with CTBP1, HDAC4, HDAC5 and HDAC7. In terms of tissue distribution, highly expressed in lung and testis.

The protein resides in the nucleus. Functionally, transcriptional corepressor. May specifically inhibit gene expression when recruited to promoter regions by sequence specific DNA-binding proteins such as BCL6. This repression may be mediated at least in part by histone deacetylase activities which can associate with this corepressor. The sequence is that of BCL-6 corepressor-like protein 1 (Bcorl1) from Mus musculus (Mouse).